Consider the following 311-residue polypeptide: Giardin subunit gamma (311 aa).

Residues 185–233 are a coiled coil; the sequence is GLQTEINSLEAIIEREFAQAANRLNQEVSNFKESFDASERNIKLQKKHV.

In terms of assembly, interacts with EB1.

The protein resides in the cytoplasm. It localises to the cytoskeleton. Its function is as follows. Giardins are involved in parasite attachment to the intestinal mucosa and in the cytoskeletal disassembly and reassembly that marks the transition from infectious trophozoite to transmissible cyst. They may interact with other cytoskeletal proteins such as microtubules in the microribbons or crossbridges, to maintain the integrity of the ventral disk. Involved in formation of the ventral disk. This is Giardin subunit gamma from Giardia intestinalis (Giardia lamblia).